Reading from the N-terminus, the 977-residue chain is Short transient receptor potential channel 4 (977 aa).

At 1–324 (MAQFYYKRNV…YDEFPGWRRR (324 aa)) the chain is on the cytoplasmic side. 4 ANK repeats span residues 29–60 (LSPSEKAYLNAVEKGDYASVKKSLEEAEIYFK), 71–93 (RTALLIAIENENLELIELLLSFN), 96–118 (VGDALLHAIRKEVVGAVELLLNH), and 141–165 (PDITPIILAAHTNNYEIIKLLVQKG). Zn(2+) contacts are provided by H172, C176, C178, and C181. Positions 223-260 (LSWELQELSKVENEFKSEYEELSRQCKQFAKDLLDQTR) form a coiled coil. Residues 325–359 (HWAVKMVTCFIIGLLFPVFSVCYLIAPKSPLGLFI) constitute an intramembrane region (discontinuously helical). Residues 360–362 (RKP) lie on the Cytoplasmic side of the membrane. The chain crosses the membrane as a helical span at residues 363-383 (FIKFICHTASYLTFLFLLLLA). The Extracellular segment spans residues 384–403 (SQHIDRSDLNRQGPPPTIVE). Residues 404–418 (WMILPWVLGFIWGEI) traverse the membrane as a helical segment. The Ca(2+) site is built by E417, Q420, N435, and D438. Over 419–432 (KQMWDGGLQDYIHD) the chain is Cytoplasmic. Residues 433 to 453 (WWNLMDFVMNSLYLATISLKI) traverse the membrane as a helical segment. Residues 454–475 (VAFVKYSALNPRESWDMWHPTL) lie on the Extracellular side of the membrane. Residues 476-498 (VAEALFAIANIFSSLRLISLFTA) traverse the membrane as a helical segment. Over 499–511 (NSHLGPLQISLGR) the chain is Cytoplasmic. A helical transmembrane segment spans residues 512 to 534 (MLLDILKFLFIYCLVLLAFANGL). Residues 535–599 (NQLYFYYEET…HEFTEFVGAT (65 aa)) are Extracellular-facing. An intrachain disulfide couples C549 to C554. Residues 600–620 (MFGTYNVISLVVLLNMLIAMM) traverse the membrane as a helical segment. Residues 615–977 (MLIAMMNNSY…THEDYVTTRL (363 aa)) form an interaction with ITPR1, ITPR2 and ITPR3 region. Residues 621–977 (NNSYQLIADH…THEDYVTTRL (357 aa)) lie on the Cytoplasmic side of the membrane. The tract at residues 762-790 (IQSANASKESSNSADSDEKSDSEGNSKDK) is disordered. The span at 764-775 (SANASKESSNSA) shows a compositional bias: low complexity. Positions 777–788 (SDEKSDSEGNSK) are enriched in basic and acidic residues. Phosphotyrosine; by FYN occurs at positions 959 and 972. A PDZ-binding domain region spans residues 975–977 (TRL).

The protein belongs to the transient receptor (TC 1.A.4) family. STrpC subfamily. TRPC4 sub-subfamily. Homotetramer. Heterotetramer with TRPC1 and/or TRPC5. Forms a heteromeric ion channel with TRPC1, with a 1:3 TRPC1:TRPC4 stoichiometry. Interacts with TRPC4AP. Isoform alpha but not isoform beta interacts with ITPR1, ITPR2 and ITPR3. Interacts with (via PDZ-binding domain) with NHERF1. Interacts with MX1 and RNF24. Interacts (via CIRB domain) with SESTD1 (via spectrin 1 repeat). Interacts with CDH5 and CTNNB1. Interacts with SPTAN1 (via C-terminal spectrin repeats) and SPTBN5 (via C-terminus). Interacts (via protein 4.1-binding domain) with EPB41L2. Interacts with PLSCR1. Post-translationally, phosphorylation modulates TRPC channel function by regulating the level of TRPC4 at the cell surface and by increasing the association with NHERF1. In terms of tissue distribution, strongly expressed in placenta. Expressed at lower levels in heart, pancreas, kidney and brain. Expressed in endothelial cells. Isoform alpha was found to be the predominant isoform. Isoform beta was not found in pancreas and brain.

The protein localises to the cell membrane. The catalysed reaction is Ca(2+)(in) = Ca(2+)(out). It catalyses the reaction Na(+)(in) = Na(+)(out). The enzyme catalyses Li(+)(in) = Li(+)(out). It carries out the reaction Cs(+)(in) = Cs(+)(out). With respect to regulation, may be operated by a phosphatidylinositol second messenger system activated by receptor tyrosine kinases or G-protein coupled receptors. May be activated by intracellular calcium store depletion. Inhibited by xanthine-based inhibitor Pico145. In terms of biological role, forms a receptor-activated non-selective calcium permeant cation channel. Acts as a cell-cell contact-dependent endothelial calcium entry channel. Forms a homomeric ion channel or a heteromeric ion channel with TRPC1; the heteromeric ion channel has reduced calcium permeability compared to the homomeric channel. Also permeable to monovalent ions including sodium, lithium and cesium ions. Functionally, forms a receptor-activated non-selective calcium permeant cation channel. The polypeptide is Short transient receptor potential channel 4 (TRPC4) (Homo sapiens (Human)).